Consider the following 119-residue polypeptide: Large ribosomal subunit protein uL18 (119 aa).

This sequence belongs to the universal ribosomal protein uL18 family. As to quaternary structure, part of the 50S ribosomal subunit; part of the 5S rRNA/L5/L18/L25 subcomplex. Contacts the 5S and 23S rRNAs.

Functionally, this is one of the proteins that bind and probably mediate the attachment of the 5S RNA into the large ribosomal subunit, where it forms part of the central protuberance. In Chlorobaculum tepidum (strain ATCC 49652 / DSM 12025 / NBRC 103806 / TLS) (Chlorobium tepidum), this protein is Large ribosomal subunit protein uL18.